A 264-amino-acid polypeptide reads, in one-letter code: Teichoic acids export ATP-binding protein TagH (264 aa).

One can recognise an ABC transporter domain in the interval 24 to 243; it reads IKDALIPKNK…YEAFLKTFKK (220 aa). 57-64 provides a ligand contact to ATP; it reads GINGSGKS.

Belongs to the ABC transporter superfamily. Teichoic acids exporter (TC 3.A.1.104.1) family. As to quaternary structure, the complex is composed of two ATP-binding proteins (TagH) and two transmembrane proteins (TagG).

The protein localises to the cell membrane. It catalyses the reaction ATP + H2O + teichoic acidSide 1 = ADP + phosphate + teichoic acidSide 2.. Its function is as follows. Part of the ABC transporter complex TagGH involved in teichoic acids export. Responsible for energy coupling to the transport system. The protein is Teichoic acids export ATP-binding protein TagH of Staphylococcus epidermidis (strain ATCC 35984 / DSM 28319 / BCRC 17069 / CCUG 31568 / BM 3577 / RP62A).